A 436-amino-acid polypeptide reads, in one-letter code: UDP-N-acetylmuramate--L-alanine ligase (436 aa).

Position 108–114 (108–114) interacts with ATP; sequence GAHGKTS.

Belongs to the MurCDEF family.

Its subcellular location is the cytoplasm. It catalyses the reaction UDP-N-acetyl-alpha-D-muramate + L-alanine + ATP = UDP-N-acetyl-alpha-D-muramoyl-L-alanine + ADP + phosphate + H(+). It functions in the pathway cell wall biogenesis; peptidoglycan biosynthesis. In terms of biological role, cell wall formation. The polypeptide is UDP-N-acetylmuramate--L-alanine ligase (Bacillus cereus (strain G9842)).